Consider the following 209-residue polypeptide: Large ribosomal subunit protein uL4 (209 aa).

The tract at residues 46–71 is disordered; the sequence is GTSSTKTRSEVRGSSKKPWKQKGTGR. The segment covering 59 to 71 has biased composition (basic residues); the sequence is SSKKPWKQKGTGR.

This sequence belongs to the universal ribosomal protein uL4 family. Part of the 50S ribosomal subunit.

Functionally, one of the primary rRNA binding proteins, this protein initially binds near the 5'-end of the 23S rRNA. It is important during the early stages of 50S assembly. It makes multiple contacts with different domains of the 23S rRNA in the assembled 50S subunit and ribosome. Forms part of the polypeptide exit tunnel. The protein is Large ribosomal subunit protein uL4 of Borreliella afzelii (strain PKo) (Borrelia afzelii).